The sequence spans 71 residues: MGSFSLLHWLVVLVIVLLVFGTKRLANGAKDIGSAIKEFKKSLREDDKPTDQLGSTSQSTASGPQQDHGKH.

A helical membrane pass occupies residues Met1–Gly21. The disordered stretch occupies residues Leu43 to His71. The span at Gln52–Gln65 shows a compositional bias: polar residues.

It belongs to the TatA/E family. The Tat system comprises two distinct complexes: a TatABC complex, containing multiple copies of TatA, TatB and TatC subunits, and a separate TatA complex, containing only TatA subunits. Substrates initially bind to the TatABC complex, which probably triggers association of the separate TatA complex to form the active translocon.

The protein resides in the cell inner membrane. Its function is as follows. Part of the twin-arginine translocation (Tat) system that transports large folded proteins containing a characteristic twin-arginine motif in their signal peptide across membranes. TatA could form the protein-conducting channel of the Tat system. In Xylella fastidiosa (strain 9a5c), this protein is Sec-independent protein translocase protein TatA.